Here is a 362-residue protein sequence, read N- to C-terminus: Probable branched-chain-amino-acid aminotransferase (362 aa).

Residue Lys-202 is modified to N6-(pyridoxal phosphate)lysine.

It belongs to the class-IV pyridoxal-phosphate-dependent aminotransferase family. Pyridoxal 5'-phosphate is required as a cofactor.

It carries out the reaction L-leucine + 2-oxoglutarate = 4-methyl-2-oxopentanoate + L-glutamate. The catalysed reaction is L-isoleucine + 2-oxoglutarate = (S)-3-methyl-2-oxopentanoate + L-glutamate. It catalyses the reaction L-valine + 2-oxoglutarate = 3-methyl-2-oxobutanoate + L-glutamate. The protein operates within amino-acid biosynthesis; L-isoleucine biosynthesis; L-isoleucine from 2-oxobutanoate: step 4/4. It participates in amino-acid biosynthesis; L-leucine biosynthesis; L-leucine from 3-methyl-2-oxobutanoate: step 4/4. Its pathway is amino-acid biosynthesis; L-valine biosynthesis; L-valine from pyruvate: step 4/4. Functionally, acts on leucine, isoleucine and valine. The protein is Probable branched-chain-amino-acid aminotransferase (ilvE) of Streptomyces coelicolor (strain ATCC BAA-471 / A3(2) / M145).